A 393-amino-acid polypeptide reads, in one-letter code: NAD(P)H-quinone oxidoreductase subunit H, chloroplastic (393 aa).

It belongs to the complex I 49 kDa subunit family. In terms of assembly, NDH is composed of at least 16 different subunits, 5 of which are encoded in the nucleus.

It localises to the plastid. Its subcellular location is the chloroplast thylakoid membrane. The enzyme catalyses a plastoquinone + NADH + (n+1) H(+)(in) = a plastoquinol + NAD(+) + n H(+)(out). The catalysed reaction is a plastoquinone + NADPH + (n+1) H(+)(in) = a plastoquinol + NADP(+) + n H(+)(out). NDH shuttles electrons from NAD(P)H:plastoquinone, via FMN and iron-sulfur (Fe-S) centers, to quinones in the photosynthetic chain and possibly in a chloroplast respiratory chain. The immediate electron acceptor for the enzyme in this species is believed to be plastoquinone. Couples the redox reaction to proton translocation, and thus conserves the redox energy in a proton gradient. This chain is NAD(P)H-quinone oxidoreductase subunit H, chloroplastic, found in Manihot esculenta (Cassava).